The chain runs to 175 residues: MASLNDSHFDLFDLPAQFALDASALDHAYRTVQAQVHPDRFAAAGDAQKRIAMQWATRTNEAYQTLRDPLKRATYLLHLRGIDVGAHENTAMEPAFLMQQMEWREGIEDAAAAKNVDALDALLTELRDEERMRFDKLGALLDSGANQAAGEAVRQLMFIERVASEIGTQIERLDN.

The J domain occupies 7–79; that stretch reads SHFDLFDLPA…LKRATYLLHL (73 aa).

This sequence belongs to the HscB family. As to quaternary structure, interacts with HscA and stimulates its ATPase activity.

Functionally, co-chaperone involved in the maturation of iron-sulfur cluster-containing proteins. Seems to help targeting proteins to be folded toward HscA. The polypeptide is Co-chaperone protein HscB homolog (Paraburkholderia phytofirmans (strain DSM 17436 / LMG 22146 / PsJN) (Burkholderia phytofirmans)).